We begin with the raw amino-acid sequence, 307 residues long: Carbamate kinase (307 aa).

This sequence belongs to the carbamate kinase family.

The protein resides in the cytoplasm. The catalysed reaction is hydrogencarbonate + NH4(+) + ATP = carbamoyl phosphate + ADP + H2O + H(+). It functions in the pathway metabolic intermediate metabolism; carbamoyl phosphate degradation; CO(2) and NH(3) from carbamoyl phosphate: step 1/1. Carbamate kinase involved in the arginine deiminase pathway of fermentative arginine utilization. This Halobacterium salinarum (strain ATCC 700922 / JCM 11081 / NRC-1) (Halobacterium halobium) protein is Carbamate kinase (arcC).